Reading from the N-terminus, the 1337-residue chain is DNA mismatch repair protein Msh6 (1337 aa).

Residues 68–130 (PGDLVWAKME…IKYLRPYKGS (63 aa)) enclose the PWWP domain. Positions 170-310 (AVCSEPSDTE…SEAPKRAAPV (141 aa)) are disordered. A compositionally biased stretch (acidic residues) spans 176-187 (SDTEEAEEEEME). Positions 226 to 248 (VLDSDSDRDGSDVEFKPDVKEAS) are enriched in basic and acidic residues. Positions 257–272 (DENEATDVETDEESIE) are enriched in acidic residues. Over residues 279–292 (PSKRKRGNVSKPSK) the composition is skewed to basic residues. Residues 294 to 305 (SSLENEHSEAPK) show a composition bias toward basic and acidic residues. 1111 to 1118 (GPNMGGKS) serves as a coordination point for ATP.

Belongs to the DNA mismatch repair MutS family.

Its subcellular location is the nucleus. Its function is as follows. Component of the post-replicative DNA mismatch repair system (MMR). Involved in B cell growth by positively regulating B cell proliferation and controlling replication efficiency. Controls cell cycle to prevent re-replication and defects in DNA damage-induced G2 checkpoint. Doesn't seem to counteract or control the immunoglobulin gene conversion (Ig GC) and to contribute to guanine/uracil mismatch repair. The protein is DNA mismatch repair protein Msh6 of Gallus gallus (Chicken).